The following is a 104-amino-acid chain: MKIHKGDMVIVISGPDKGAKGKVIEAYPKRDKVLVEGVNRVKKHVANSATERGAESGGIVTQEAPIHVSNVAIVDSEGNPTRVGYRFDENGKKVRIARSNGKDI.

This sequence belongs to the universal ribosomal protein uL24 family. As to quaternary structure, part of the 50S ribosomal subunit.

Functionally, one of two assembly initiator proteins, it binds directly to the 5'-end of the 23S rRNA, where it nucleates assembly of the 50S subunit. In terms of biological role, one of the proteins that surrounds the polypeptide exit tunnel on the outside of the subunit. The protein is Large ribosomal subunit protein uL24 of Corynebacterium aurimucosum (strain ATCC 700975 / DSM 44827 / CIP 107346 / CN-1) (Corynebacterium nigricans).